The primary structure comprises 511 residues: ATP synthase subunit alpha (511 aa).

169–176 (GDRQTGKT) contributes to the ATP binding site.

The protein belongs to the ATPase alpha/beta chains family. F-type ATPases have 2 components, CF(1) - the catalytic core - and CF(0) - the membrane proton channel. CF(1) has five subunits: alpha(3), beta(3), gamma(1), delta(1), epsilon(1). CF(0) has three main subunits: a(1), b(2) and c(9-12). The alpha and beta chains form an alternating ring which encloses part of the gamma chain. CF(1) is attached to CF(0) by a central stalk formed by the gamma and epsilon chains, while a peripheral stalk is formed by the delta and b chains.

It localises to the cell inner membrane. The catalysed reaction is ATP + H2O + 4 H(+)(in) = ADP + phosphate + 5 H(+)(out). Produces ATP from ADP in the presence of a proton gradient across the membrane. The alpha chain is a regulatory subunit. The sequence is that of ATP synthase subunit alpha from Janthinobacterium sp. (strain Marseille) (Minibacterium massiliensis).